A 355-amino-acid chain; its full sequence is Syntaxin-5 (355 aa).

Over 1 to 333 (MIPRKRYGSK…KYFQSVTSNR (333 aa)) the chain is Cytoplasmic. Positions 245–247 (IDM) match the IxM motif; signal for cargo packaging into COPII-coated vesicles motif. The region spanning 263–325 (DSYIQSRADT…EAAHSEILKY (63 aa)) is the t-SNARE coiled-coil homology domain. Residues 287-318 (FQQLAHMVKEQEETIQRIDENVLGAQLDVEAA) adopt a coiled-coil conformation. A helical; Anchor for type IV membrane protein transmembrane segment spans residues 334–354 (WLMVKIFLILIVFFIIFVVFL). Residue Ala-355 is a topological domain, vesicular.

The protein belongs to the syntaxin family. In terms of assembly, part of a ternary complex containing STX5A, NSFL1C and VCP. Part of a unique SNARE complex composed of the Golgi SNAREs GOSR1, GOSR2, YKT6 and VTI1A. Component of a SNARE complex consisting of STX5, YKT6, GOSR1 and BET1L. Interacts with BET1L. Interacts with BET1. Interacts with COG4. Interacts with GM130/GOLGA2. Interacts (via IxM motif) with SEC24C and SEC24D; mediates STX5 packaging into COPII-coated vesicles. Interacts with VLDLR; this interaction mediates VLDLR translocation from the endoplasmic reticulum to the plasma membrane.

It is found in the endoplasmic reticulum-Golgi intermediate compartment membrane. Its subcellular location is the golgi apparatus membrane. In terms of biological role, mediates endoplasmic reticulum to Golgi transport. Together with p115/USO1 and GM130/GOLGA2, involved in vesicle tethering and fusion at the cis-Golgi membrane to maintain the stacked and inter-connected structure of the Golgi apparatus. Functionally, required for Golgi to endoplasmic reticulum retrogade transport, and for intra-Golgi transport. The chain is Syntaxin-5 (Stx5) from Mus musculus (Mouse).